A 358-amino-acid chain; its full sequence is Fructose-bisphosphate aldolase 1, cytoplasmic (358 aa).

R39 contacts substrate. The Proton acceptor role is filled by E183. K225 acts as the Schiff-base intermediate with dihydroxyacetone-P in catalysis. Residues 266–268 and R298 each bind substrate; that span reads SGG.

It belongs to the class I fructose-bisphosphate aldolase family. As to quaternary structure, homotetramer. Expressed in callus.

It localises to the cytoplasm. The protein resides in the cytosol. The catalysed reaction is beta-D-fructose 1,6-bisphosphate = D-glyceraldehyde 3-phosphate + dihydroxyacetone phosphate. The protein operates within carbohydrate degradation; glycolysis; D-glyceraldehyde 3-phosphate and glycerone phosphate from D-glucose: step 4/4. Fructose-bisphosphate aldolase that plays a key role in glycolysis and gluconeogenesis. Involved in gibberellin-mediated root growth. May be regulated by CDPK13. Associates with vacuolar proton ATPase (V-ATPase) and may regulate the V-ATPase-mediated control of root cell elongation. In Oryza sativa subsp. japonica (Rice), this protein is Fructose-bisphosphate aldolase 1, cytoplasmic.